Consider the following 326-residue polypeptide: MIPVLPPLEALLDRLYVVALPMRVRFRGITTREVALIEGPAGWGEFGAFVEYQSAQACAWLASAIETAYCAPPPVRRDRVPINATVPAVAAAQVGEVLARFPGARTAKVKVAEPGQSLADDIERVNAVRELVPMVRVDANGGWGVAEAVAAAAALTADGPLEYLEQPCATVAELAELRRRVDVPIAADESIRKAEDPLAVVRAQAADIAVLKVAPLGGISALLDIAARIAVPVVVSSALDSAVGIAAGLTAAAALPELDHACGLGTGGLFEEDVAEPAAPVDGFLAVARTTPDPARLQALGAPPQRRQWWIDRVKACYSLLVPSFG.

Lys-110 functions as the Proton donor in the catalytic mechanism. Residues Asp-138, Glu-165, and Asp-188 each coordinate Mg(2+). Lys-212 functions as the Proton acceptor in the catalytic mechanism.

It belongs to the mandelate racemase/muconate lactonizing enzyme family. MenC type 1 subfamily. A divalent metal cation serves as cofactor.

The catalysed reaction is (1R,6R)-6-hydroxy-2-succinyl-cyclohexa-2,4-diene-1-carboxylate = 2-succinylbenzoate + H2O. It functions in the pathway quinol/quinone metabolism; 1,4-dihydroxy-2-naphthoate biosynthesis; 1,4-dihydroxy-2-naphthoate from chorismate: step 4/7. The protein operates within quinol/quinone metabolism; menaquinone biosynthesis. Its function is as follows. Converts 2-succinyl-6-hydroxy-2,4-cyclohexadiene-1-carboxylate (SHCHC) to 2-succinylbenzoate (OSB). This chain is o-succinylbenzoate synthase, found in Mycobacterium bovis (strain ATCC BAA-935 / AF2122/97).